Reading from the N-terminus, the 1628-residue chain is Centrosomal protein of 170 kDa protein B (1628 aa).

One can recognise an FHA domain in the interval 23 to 73; that stretch reads IFVGREDCELMLQSRSVDKQHAVINYDSDKDEHRVKDLGSLNGTFVNDVRI. Disordered stretches follow at residues 136–201, 329–369, 415–504, 566–586, 637–659, 719–739, 758–842, 1005–1084, 1100–1341, 1379–1405, 1443–1463, and 1560–1628; these read EHGA…DMTQ, LIRR…SEDP, PRKK…GKNY, SDVRTGKVKNEEEDNLSDAGT, LASEPSVPHKPIMSSTPPVKLSN, EHQGEADPTVPSRTRRLLPQL, ESQR…KKST, VSLV…LDFT, TVSS…EDEQ, AGDGDSQSSSGTGQSTSISSVPNTPAS, GSTGLEDFDQNMNDSREDPSK, and HLDV…TYIV. Composition is skewed to basic and acidic residues over residues 147 to 156 and 180 to 201; these read KQDKADKKAT and KLDKEGRRQDEHYSERPNDMTQ. Positions 421-434 are enriched in polar residues; that stretch reads QSFTHNANSPQNDT. Basic and acidic residues predominate over residues 436–453; sequence PVLKAKAEKRKGTLHVEK. The span at 454 to 479 shows a compositional bias: polar residues; sequence VSTNGMGSTAPASKSLSSPSFPQRSN. The span at 481-490 shows a compositional bias: basic and acidic residues; that stretch reads FRREKTEDRI. Composition is skewed to basic and acidic residues over residues 758-773 and 817-828; these read ESQRKSLEEPEKRISE and WKGEESHSREPS. A compositionally biased stretch (polar residues) spans 1005 to 1023; it reads VSLVSDKNVPSHSQKNRIV. Positions 1045 to 1056 are enriched in basic and acidic residues; sequence ARERLSEKRRTV. The span at 1129-1150 shows a compositional bias: polar residues; that stretch reads RSSNAQKVQQALTRSNSLSTPR. Low complexity predominate over residues 1176–1193; the sequence is SNISPGTSSANSSSAKSS. The span at 1216-1227 shows a compositional bias: polar residues; it reads NVPSDSETTSSV. Low complexity-rich tracts occupy residues 1261 to 1280, 1312 to 1328, and 1381 to 1398; these read TQKQTPRPRSSSVKYSSSST, ASTATQTSRSSSVSRRQ, and DGDSQSSSGTGQSTSISS. Positions 1564 to 1596 are enriched in polar residues; it reads PSSNKKTSSTILTSNPLSRTTNNSAARTESQTP. The span at 1606-1618 shows a compositional bias: low complexity; it reads SSSSSSRSPGSSF.

Belongs to the CEP170 family.

The protein localises to the cytoplasm. The protein resides in the cytoskeleton. Plays a role in microtubule organization. This Xenopus tropicalis (Western clawed frog) protein is Centrosomal protein of 170 kDa protein B (cep170b).